Reading from the N-terminus, the 94-residue chain is MASLHDVARLAGVSKSTVSRVINDEYGVKEATKQKVRQAVAECGYVPNQVAKDLKEESSAIIVQDKTGKVLFVKEGALEQDEIAKVIELIKQNI.

In terms of domain architecture, HTH lacI-type spans Met1–Glu56. The segment at residues Leu4–Asn23 is a DNA-binding region (H-T-H motif).

Functionally, repressor for the scr operon. Binds D-fructose as an inducer. This chain is Sucrose operon repressor (scrR), found in Vibrio alginolyticus.